A 231-amino-acid chain; its full sequence is Putative N-acetylmannosamine-6-phosphate 2-epimerase (231 aa).

Belongs to the NanE family.

The catalysed reaction is an N-acyl-D-glucosamine 6-phosphate = an N-acyl-D-mannosamine 6-phosphate. It participates in amino-sugar metabolism; N-acetylneuraminate degradation; D-fructose 6-phosphate from N-acetylneuraminate: step 3/5. In terms of biological role, converts N-acetylmannosamine-6-phosphate (ManNAc-6-P) to N-acetylglucosamine-6-phosphate (GlcNAc-6-P). This is Putative N-acetylmannosamine-6-phosphate 2-epimerase from Latilactobacillus sakei subsp. sakei (strain 23K) (Lactobacillus sakei subsp. sakei).